We begin with the raw amino-acid sequence, 176 residues long: Large ribosomal subunit protein uL6 (176 aa).

It belongs to the universal ribosomal protein uL6 family. As to quaternary structure, part of the 50S ribosomal subunit.

This protein binds to the 23S rRNA, and is important in its secondary structure. It is located near the subunit interface in the base of the L7/L12 stalk, and near the tRNA binding site of the peptidyltransferase center. This Methanospirillum hungatei JF-1 (strain ATCC 27890 / DSM 864 / NBRC 100397 / JF-1) protein is Large ribosomal subunit protein uL6.